The sequence spans 838 residues: P protein (838 aa).

At 1–179 (MHLEGRDGRR…KLRRCVQWLK (179 aa)) the chain is on the cytoplasmic side. Disordered regions lie at residues 38-60 (LPRGAGGADPSHSCPRGAAGQSS) and 74-94 (KGRSHSSLPQMSSSRSKDSCF). Residues 78–87 (HSSLPQMSSS) are compositionally biased toward polar residues. Residues 180–197 (VMGLFAFVVLCSILFSLY) form a helical membrane-spanning segment. The Extracellular portion of the chain corresponds to 198–330 (PDQGKLWQLL…QYLRGSVETQ (133 aa)). Asparagine 214, asparagine 218, and asparagine 273 each carry an N-linked (GlcNAc...) asparagine glycan. A helical transmembrane segment spans residues 331–347 (VTIATAILAGVYALIIF). The Cytoplasmic portion of the chain corresponds to 348–353 (EIVHRT). Residues 354 to 370 (LAAMLGSLAALAALAVI) form a helical membrane-spanning segment. The Extracellular segment spans residues 371–384 (GDRPSLTHVVEWID). The helical transmembrane segment at 385 to 401 (FETLALLFGMMILVAIF) threads the bilayer. The Cytoplasmic portion of the chain corresponds to 402–423 (SETGFFDYCAVKAYRLSRGRVW). Residues 424–440 (AMIIMLCLIAAVLSAFL) form a helical membrane-spanning segment. Residues 441 to 513 (DNVTTMLLFT…DFAGFTAHMF (73 aa)) are Extracellular-facing. N-linked (GlcNAc...) asparagine glycosylation occurs at asparagine 442. A helical membrane pass occupies residues 514–530 (IGICLVLLVCFPLLRLL). Residues 531–620 (YWNRKLYNKE…LQKKHRISDG (90 aa)) are Cytoplasmic-facing. Residues 621 to 637 (ILLAKCLTVLGFVIFMF) form a helical membrane-spanning segment. Topologically, residues 638–647 (FLNSFVPGIH) are extracellular. Residues 648 to 664 (LDLGWIAILGAIWLLIL) traverse the membrane as a helical segment. Residues 665 to 679 (ADIHDFEIILHRVEW) are Cytoplasmic-facing. Residues 680 to 696 (ATLLFFAALFVLMEALA) form a helical membrane-spanning segment. Over 697–720 (HLHLIEYVGEQTALLIKMVPEEQR) the chain is Extracellular. A helical membrane pass occupies residues 721 to 737 (LIAAIVLVVWVSALASS). Residues 738–760 (LIDNIPFTATMIPVLLNLSHDPE) lie on the Cytoplasmic side of the membrane. Residues 761–777 (VGLPAPPLMYALAFGAC) traverse the membrane as a helical segment. Topologically, residues 778 to 817 (LGGNGTLIGASANVVCAGIAEQHGYGFSFMEFFRLGFPMM) are extracellular. An N-linked (GlcNAc...) asparagine glycan is attached at asparagine 781. The chain crosses the membrane as a helical span at residues 818–834 (VVSCTVGMCYLLVAHVV). Topologically, residues 835–838 (VGWN) are cytoplasmic.

This sequence belongs to the CitM (TC 2.A.11) transporter family. Expressed in melanocytes and retinal pigment epithelium.

The protein resides in the melanosome membrane. It carries out the reaction chloride(in) = chloride(out). Functionally, contributes to a melanosome-specific anion (chloride) current that modulates melanosomal pH for optimal tyrosinase activity required for melanogenesis and the melanosome maturation. One of the components of the mammalian pigmentary system. May serve as a key control point at which ethnic skin color variation is determined. Major determinant of brown and/or blue eye color. Seems to regulate the post-translational processing of tyrosinase, which catalyzes the limiting reaction in melanin synthesis. This is P protein from Homo sapiens (Human).